We begin with the raw amino-acid sequence, 331 residues long: Hyaluronidase (331 aa).

2 disulfide bridges follow: C19–C308 and C185–C197. Residue N79 is glycosylated (N-linked (GlcNAc...) asparagine). Residue E109 is the Proton donor of the active site. A glycan (N-linked (GlcNAc...) asparagine) is linked at N325.

This sequence belongs to the glycosyl hydrolase 56 family. Expressed by the venom gland.

Its subcellular location is the secreted. The enzyme catalyses Random hydrolysis of (1-&gt;4)-linkages between N-acetyl-beta-D-glucosamine and D-glucuronate residues in hyaluronate.. Hydrolyzes high molecular weight hyaluronic acid to produce small oligosaccharides. The chain is Hyaluronidase from Dolichovespula maculata (Bald-faced hornet).